A 217-amino-acid chain; its full sequence is Probable transaldolase (217 aa).

Catalysis depends on Lys83, which acts as the Schiff-base intermediate with substrate.

The protein belongs to the transaldolase family. Type 3B subfamily.

The protein resides in the cytoplasm. The catalysed reaction is D-sedoheptulose 7-phosphate + D-glyceraldehyde 3-phosphate = D-erythrose 4-phosphate + beta-D-fructose 6-phosphate. It functions in the pathway carbohydrate degradation; pentose phosphate pathway; D-glyceraldehyde 3-phosphate and beta-D-fructose 6-phosphate from D-ribose 5-phosphate and D-xylulose 5-phosphate (non-oxidative stage): step 2/3. Its function is as follows. Transaldolase is important for the balance of metabolites in the pentose-phosphate pathway. This chain is Probable transaldolase, found in Caulobacter vibrioides (strain NA1000 / CB15N) (Caulobacter crescentus).